We begin with the raw amino-acid sequence, 86 residues long: Large ribosomal subunit protein eL20 (86 aa).

It belongs to the eukaryotic ribosomal protein eL20 family. In terms of assembly, part of the 50S ribosomal subunit. Binds 23S rRNA.

The sequence is that of Large ribosomal subunit protein eL20 from Saccharolobus solfataricus (strain ATCC 35092 / DSM 1617 / JCM 11322 / P2) (Sulfolobus solfataricus).